Consider the following 556-residue polypeptide: Testis-specific protein 10-interacting protein (556 aa).

Residues 1-16 (MGQDTDMLNTYQQLVR) show a composition bias toward polar residues. Disordered stretches follow at residues 1-31 (MGQDTDMLNTYQQLVRTPSVRPGQDVRLQAP), 50-102 (GCLG…LLPR), 123-155 (LQPSSPTPGHQALPMPSSFSQRQSRRKSTANLP), and 179-309 (GGVS…QWRK). Residues 208-219 (GSASDKQVQLQS) are compositionally biased toward polar residues. The span at 244 to 258 (SEEEQFSEATEEAEE) shows a compositional bias: acidic residues. Residues 289 to 301 (QGQSQGSSPSFNN) show a composition bias toward polar residues. A coiled-coil region spans residues 379 to 464 (RQEATRSLLQ…LQGIQHRVQA (86 aa)). The disordered stretch occupies residues 503–556 (AGKVDREGTPRKPRSHRSMGVRMEHSPQRPPRTEPTGSQPDRHYNPSLDPECSP).

This Homo sapiens (Human) protein is Testis-specific protein 10-interacting protein (TSGA10IP).